We begin with the raw amino-acid sequence, 316 residues long: Glycerol-3-phosphate dehydrogenase [NAD(P)+] (316 aa).

NADPH is bound by residues Ser-14, Phe-15, Arg-35, and Lys-109. The sn-glycerol 3-phosphate site is built by Lys-109 and Gly-137. Ala-141 is a binding site for NADPH. Sn-glycerol 3-phosphate-binding residues include Lys-192, Asp-248, Ser-258, Arg-259, and Asn-260. Catalysis depends on Lys-192, which acts as the Proton acceptor. Arg-259 contacts NADPH. 2 residues coordinate NADPH: Leu-283 and Glu-285.

Belongs to the NAD-dependent glycerol-3-phosphate dehydrogenase family.

The protein resides in the cytoplasm. It carries out the reaction sn-glycerol 3-phosphate + NAD(+) = dihydroxyacetone phosphate + NADH + H(+). It catalyses the reaction sn-glycerol 3-phosphate + NADP(+) = dihydroxyacetone phosphate + NADPH + H(+). The protein operates within membrane lipid metabolism; glycerophospholipid metabolism. In terms of biological role, catalyzes the reduction of the glycolytic intermediate dihydroxyacetone phosphate (DHAP) to sn-glycerol 3-phosphate (G3P), the key precursor for phospholipid synthesis. The sequence is that of Glycerol-3-phosphate dehydrogenase [NAD(P)+] from Rickettsia prowazekii (strain Madrid E).